Here is a 194-residue protein sequence, read N- to C-terminus: ATP-dependent Clp protease proteolytic subunit (194 aa).

Residue serine 97 is the Nucleophile of the active site. Histidine 122 is a catalytic residue.

It belongs to the peptidase S14 family. As to quaternary structure, fourteen ClpP subunits assemble into 2 heptameric rings which stack back to back to give a disk-like structure with a central cavity, resembling the structure of eukaryotic proteasomes.

The protein localises to the cytoplasm. It catalyses the reaction Hydrolysis of proteins to small peptides in the presence of ATP and magnesium. alpha-casein is the usual test substrate. In the absence of ATP, only oligopeptides shorter than five residues are hydrolyzed (such as succinyl-Leu-Tyr-|-NHMec, and Leu-Tyr-Leu-|-Tyr-Trp, in which cleavage of the -Tyr-|-Leu- and -Tyr-|-Trp bonds also occurs).. Its function is as follows. Cleaves peptides in various proteins in a process that requires ATP hydrolysis. Has a chymotrypsin-like activity. Plays a major role in the degradation of misfolded proteins. This is ATP-dependent Clp protease proteolytic subunit from Lactobacillus delbrueckii subsp. bulgaricus (strain ATCC BAA-365 / Lb-18).